A 232-amino-acid chain; its full sequence is Cytidylate kinase (232 aa).

10 to 18 (GPAASGKST) lines the ATP pocket.

This sequence belongs to the cytidylate kinase family. Type 1 subfamily.

It localises to the cytoplasm. It catalyses the reaction CMP + ATP = CDP + ADP. The enzyme catalyses dCMP + ATP = dCDP + ADP. In Phytoplasma mali (strain AT), this protein is Cytidylate kinase.